Here is a 439-residue protein sequence, read N- to C-terminus: Protein translocase subunit SecY (439 aa).

Transmembrane regions (helical) follow at residues 23–43 (IASVVIALIIFRIGSFIPIPG), 77–97 (IFALGIMPYISSSIIIQLLTL), 125–145 (LVLALFQSIGIVTSLPKISGM), 154–174 (FYFYFTAIIILVTGTMFLMWL), 187–207 (ISIIIFIGIIAGLPSAIVHTI), 217–237 (ILLFLCVLILIFSVVFLVVFI), 274–294 (VIPAIFASSVVLFPVTIISWF), 317–337 (YLILYVFSIIFFCFFYTGLVF), 369–389 (IMIRLTLFGSLYIAFICLIPE), and 397–417 (VPFYFGGTSLLIVVVVIMDFI).

This sequence belongs to the SecY/SEC61-alpha family. Component of the Sec protein translocase complex. Heterotrimer consisting of SecY, SecE and SecG subunits. The heterotrimers can form oligomers, although 1 heterotrimer is thought to be able to translocate proteins. Interacts with the ribosome. Interacts with SecDF, and other proteins may be involved. Interacts with SecA.

It is found in the cell membrane. Functionally, the central subunit of the protein translocation channel SecYEG. Consists of two halves formed by TMs 1-5 and 6-10. These two domains form a lateral gate at the front which open onto the bilayer between TMs 2 and 7, and are clamped together by SecE at the back. The channel is closed by both a pore ring composed of hydrophobic SecY resides and a short helix (helix 2A) on the extracellular side of the membrane which forms a plug. The plug probably moves laterally to allow the channel to open. The ring and the pore may move independently. This Buchnera aphidicola subsp. Schizaphis graminum (strain Sg) protein is Protein translocase subunit SecY.